Here is a 187-residue protein sequence, read N- to C-terminus: Probable DNA endonuclease SmrA (187 aa).

The Smr domain occupies 88-169 (LNLLRQPVEE…GSGACYVALR (82 aa)).

Functionally, has DNA endonuclease activity. Binds DNA. The chain is Probable DNA endonuclease SmrA (smrA) from Escherichia coli (strain K12).